The sequence spans 152 residues: Antiholin-like protein LrgA (152 aa).

A run of 4 helical transmembrane segments spans residues 23–43 (YSIF…KIIE), 45–65 (FMPI…IALC), 77–97 (VGTA…ISVI), and 108–128 (ILII…TGFS).

Belongs to the CidA/LrgA family. LrgA subfamily.

Its subcellular location is the cell membrane. Its function is as follows. Inhibits the expression or activity of extracellular murein hydrolases by interacting, possibly with LrgB, with the holin-like proteins CidA and/or CidB. The LrgAB and CidAB proteins may affect the proton motive force of the membrane. May be involved in programmed cell death (PCD), possibly triggering PCD in response to antibiotics and environmental stresses. The chain is Antiholin-like protein LrgA from Staphylococcus epidermidis (strain ATCC 12228 / FDA PCI 1200).